The sequence spans 134 residues: Transcription antitermination protein NusB (134 aa).

This sequence belongs to the NusB family.

Functionally, involved in transcription antitermination. Required for transcription of ribosomal RNA (rRNA) genes. Binds specifically to the boxA antiterminator sequence of the ribosomal RNA (rrn) operons. This Syntrophomonas wolfei subsp. wolfei (strain DSM 2245B / Goettingen) protein is Transcription antitermination protein NusB.